Here is a 64-residue protein sequence, read N- to C-terminus: UPF0434 protein Bmul_0750/BMULJ_02510 (64 aa).

Belongs to the UPF0434 family.

This is UPF0434 protein Bmul_0750/BMULJ_02510 from Burkholderia multivorans (strain ATCC 17616 / 249).